Consider the following 820-residue polypeptide: SART-1 family protein DOT2 (820 aa).

Basic and acidic residues-rich tracts occupy residues 1 to 156 (MEVE…DNRG), 210 to 219 (EEKRNAEKQR), and 426 to 445 (LGSRKDGRRQAMKEEKERIE). Disordered stretches follow at residues 1-177 (MEVE…SALD), 210-248 (EEKRNAEKQRAQQLSRIFEEQDNLNQGENEDGEDGEHLS), 420-445 (GLGAEDLGSRKDGRRQAMKEEKERIE), 523-544 (SSTNQTTDDNTTTGDETQENTV), 564-617 (KPES…PDEN), 657-678 (KLVGIVDDDGGKESKDKESKDR), 729-748 (KLKQMKNSDTPSQSVQRMRE), and 762-820 (GHVK…RPKP). Serine 22 is subject to Phosphoserine. Coiled coils occupy residues 58 to 120 (RDKE…EKEK), 171 to 235 (KEAS…NLNQ), and 433 to 510 (RRQA…KEEA). A compositionally biased stretch (low complexity) spans 525 to 543 (TNQTTDDNTTTGDETQENT). Positions 582–591 (VEVKEEHPDG) are enriched in basic and acidic residues. Residues 596-606 (NDTDMDAAEDS) are compositionally biased toward acidic residues. Basic and acidic residues-rich tracts occupy residues 607-617 (SDTKEITPDEN) and 665-678 (DGGKESKDKESKDR). Polar residues-rich tracts occupy residues 733 to 744 (MKNSDTPSQSVQ) and 767 to 776 (GQTSDPQSGF). Over residues 792 to 807 (GDRKVEHFLGIKRKSE) the composition is skewed to basic and acidic residues.

This sequence belongs to the SNU66/SART1 family. In terms of tissue distribution, expressed in lateral root cap, columella, meristem and quiescent center (QC). Expressed in young leaves.

The protein resides in the nucleus. In terms of biological role, plays a role in root, shoot and flower development. Probably required for normal root and shoot meristem organization and maintenance and the proper expression of PIN and PLT genes. Involved in leaf vasculature patterning. The polypeptide is SART-1 family protein DOT2 (Arabidopsis thaliana (Mouse-ear cress)).